Here is a 347-residue protein sequence, read N- to C-terminus: MDMSEINFSLDYAGVRGELRHDQPMKNYTSWRAGGSAERIYLPGDLPDLAAFLRGLPWNEPVYVMGLGSNLLVRDGGVRGSVVVLHARLNGLQLESDMGQMLIYAGAGVACAKVARFAALQGLGGAEFLAGIPGTVGGALAMNAGCYGTETWDIVSSVQTIDRLGILRRRPPGNYEIGYRHVALKAEKSSGSQKMGARENAPDDSLTDEWFSGAWFALPRDHAAAVRQKIKELLARRIHTQPLNLPNAGSVFRNPENDKAARLIESCGLKEFRIGGAMVSPRHANFIVNTGGATASDIEAVIAAVRETVKKQTGVELKQEVRIIGTPARPELHVSRTAYRKDGGYGG.

In terms of domain architecture, FAD-binding PCMH-type spans 33–221; it reads AGGSAERIYL…SGAWFALPRD (189 aa). Residue Arg180 is part of the active site. Ser250 serves as the catalytic Proton donor. Glu320 is an active-site residue.

Belongs to the MurB family. FAD is required as a cofactor.

Its subcellular location is the cytoplasm. It catalyses the reaction UDP-N-acetyl-alpha-D-muramate + NADP(+) = UDP-N-acetyl-3-O-(1-carboxyvinyl)-alpha-D-glucosamine + NADPH + H(+). It functions in the pathway cell wall biogenesis; peptidoglycan biosynthesis. Cell wall formation. In Nitrosospira multiformis (strain ATCC 25196 / NCIMB 11849 / C 71), this protein is UDP-N-acetylenolpyruvoylglucosamine reductase.